Here is a 58-residue protein sequence, read N- to C-terminus: Short neurotoxin MS11 (58 aa).

Cystine bridges form between Cys3–Cys20, Cys13–Cys38, Cys42–Cys50, and Cys51–Cys56.

The protein belongs to the three-finger toxin family. Short-chain subfamily. Expressed by the venom gland.

Its subcellular location is the secreted. Its function is as follows. Produces peripheral paralysis by blocking neuromuscular transmission at the postsynaptic site. Binds to and inhibits the endogenous nicotinic acetylcholine receptors (nAChR) in the human rhabdomyosarcoma TE 671 cell line with an IC(50) of 266 mM. Not toxic to mice by intraperitoneal injection or to zebrafish by injection at the back dorsolateral region. This Micrurus surinamensis (Surinam coral snake) protein is Short neurotoxin MS11.